A 343-amino-acid chain; its full sequence is Ribosomal RNA small subunit methyltransferase C (343 aa).

Belongs to the methyltransferase superfamily. RsmC family. As to quaternary structure, monomer.

It is found in the cytoplasm. The catalysed reaction is guanosine(1207) in 16S rRNA + S-adenosyl-L-methionine = N(2)-methylguanosine(1207) in 16S rRNA + S-adenosyl-L-homocysteine + H(+). Its function is as follows. Specifically methylates the guanine in position 1207 of 16S rRNA in the 30S particle. This is Ribosomal RNA small subunit methyltransferase C from Escherichia coli (strain 55989 / EAEC).